A 443-amino-acid chain; its full sequence is MLPVIAIVGRPNVGKSTLFNYLTKSRAALVADVPGVTRDRQYGETTIDSQRLLLVDTGGLVDTENKEVAPLAETQVEQAIDESDCILFLVDAKAGLVPADEIIAERLHKKGKKIFLAVNKADRARAAVVQSDFYKLGFGEPYVIAAASGRGVKDLMTQVLENLPEEKEVIEKEVGIKIAMIGRPNVGKSTLINRLLGEERVIVYDQPGTTRDSIYIPFARNDENYTLIDTAGIRRRAKIQDYVEKFSMIKSLQAMHAADVVIFLLDARQGVTEQDLRLLNRIVEAGVSLIIAVNKWDGLNIEERDNVRNAIDRRMPFVDFARRYFISALHGTGVGKLFRAIQESYQSIQQELTTGQLTRALEKAVAEHEPPLVKGRRIRLRYAHLGARHPLTIVVHGKKTKSLPQSYSRYLANYFRKTFNFIGVPVHIKLKTDPNPYEGQEER.

EngA-type G domains lie at 3–167 (PVIA…PEEK) and 176–349 (IKIA…QSIQ). GTP contacts are provided by residues 9–16 (GRPNVGKS), 56–60 (DTGGL), 119–122 (NKAD), 182–189 (GRPNVGKS), 229–233 (DTAGI), and 294–297 (NKWD). The region spanning 350-434 (QELTTGQLTR…PVHIKLKTDP (85 aa)) is the KH-like domain.

Belongs to the TRAFAC class TrmE-Era-EngA-EngB-Septin-like GTPase superfamily. EngA (Der) GTPase family. As to quaternary structure, associates with the 50S ribosomal subunit.

Functionally, GTPase that plays an essential role in the late steps of ribosome biogenesis. In Coxiella burnetii (strain CbuG_Q212) (Coxiella burnetii (strain Q212)), this protein is GTPase Der.